Consider the following 302-residue polypeptide: MVSWPGLGTRVTVRYRRPAGSMPPLTDAVGRLLAVDPTVRVQTKTGTIVEFSPVDVVALRVLTDAPVRTAAIRALEHAAAAAWPGVERTWLDGWLLRAGHGAVLAANSAVPLDISAHTNTITEISAWYASRDLQPWLAVPDRLLPLPADLAGERREQVLVRDVSTGEPDRSVTLLDHPDDTWLRLYHQRLPLDMATPVIDGELAFGSYLGVAVARAAVTDAPDGTRWVGLSAMRAADEQSATGSAGRQLWEALLGWGAGRGATRGYVRVHDTATSVLAESLGFRLHHHCRYLPAQSVGWDTF.

The enzyme catalyses L-lysyl-[histone] + acetyl-CoA = N(6)-acetyl-L-lysyl-[histone] + CoA + H(+). Functionally, shows histone acetyl transferase (HAT) activity with recombinant eukaryotic H3 histone expressed in bacteria as substrate and acetyl-CoA as donor. May be involved in survival under stress conditions. The chain is Probable histone acetyltransferase Rv0428c from Mycobacterium tuberculosis (strain ATCC 25618 / H37Rv).